Reading from the N-terminus, the 964-residue chain is Translation initiation factor IF-2 (964 aa).

Residues 1 to 10 are compositionally biased toward basic and acidic residues; the sequence is MSDKTNDDKT. The disordered stretch occupies residues 1–379; that stretch reads MSDKTNDDKT…SQMQETREKI (379 aa). A compositionally biased stretch (polar residues) spans 27 to 37; that stretch reads EQSTVRQNFSH. The segment covering 77–102 has biased composition (low complexity); that stretch reads APAASTPAPAQAAQPAQAAPVVRAPA. Positions 103–113 are enriched in pro residues; that stretch reads PATPAPKPAAP. The segment covering 114–140 has biased composition (low complexity); it reads AAPVTKPHVAQQRPAQQRPGGQQAQRP. Basic and acidic residues-rich tracts occupy residues 156–227 and 234–243; these read SEMD…EAAK and ARTERRDDAR. Residues 250 to 278 show a composition bias toward low complexity; it reads RPQQAGRPQGNRPPQGGRPQQGGPRPAAP. Residues 323-338 show a composition bias toward basic and acidic residues; it reads PEVRAPKVVKTEDDRR. The region spanning 462 to 629 is the tr-type G domain; that stretch reads SRPPVVTIMG…AILLQAEILD (168 aa). The interval 471–478 is G1; sequence GHVDHGKT. 471–478 is a GTP binding site; sequence GHVDHGKT. A G2 region spans residues 496–500; the sequence is GITQH. Residues 517-520 form a G3 region; that stretch reads DTPG. Residues 517–521 and 571–574 contribute to the GTP site; these read DTPGH and NKID. The segment at 571-574 is G4; it reads NKID. Residues 607 to 609 form a G5 region; it reads SAK.

Belongs to the TRAFAC class translation factor GTPase superfamily. Classic translation factor GTPase family. IF-2 subfamily.

It localises to the cytoplasm. Functionally, one of the essential components for the initiation of protein synthesis. Protects formylmethionyl-tRNA from spontaneous hydrolysis and promotes its binding to the 30S ribosomal subunits. Also involved in the hydrolysis of GTP during the formation of the 70S ribosomal complex. This Brucella anthropi (strain ATCC 49188 / DSM 6882 / CCUG 24695 / JCM 21032 / LMG 3331 / NBRC 15819 / NCTC 12168 / Alc 37) (Ochrobactrum anthropi) protein is Translation initiation factor IF-2.